A 598-amino-acid chain; its full sequence is Elongation factor 4 (598 aa).

A tr-type G domain is found at 4 to 181 (KKIRNFAIIA…AIVNLIPPPQ (178 aa)). GTP-binding positions include 16 to 21 (DHGKST) and 128 to 131 (NKID).

The protein belongs to the TRAFAC class translation factor GTPase superfamily. Classic translation factor GTPase family. LepA subfamily.

Its subcellular location is the cell membrane. The enzyme catalyses GTP + H2O = GDP + phosphate + H(+). Functionally, required for accurate and efficient protein synthesis under certain stress conditions. May act as a fidelity factor of the translation reaction, by catalyzing a one-codon backward translocation of tRNAs on improperly translocated ribosomes. Back-translocation proceeds from a post-translocation (POST) complex to a pre-translocation (PRE) complex, thus giving elongation factor G a second chance to translocate the tRNAs correctly. Binds to ribosomes in a GTP-dependent manner. In Mesomycoplasma hyopneumoniae (strain 7448) (Mycoplasma hyopneumoniae), this protein is Elongation factor 4.